A 190-amino-acid chain; its full sequence is PBP1-interacting protein LSM12 (190 aa).

The region spanning 2 to 69 (PVCNNDSQLI…IKEVTALRDN (68 aa)) is the Sm domain. Residues 84 to 190 (PSMQAARDRS…ERVQKTLSKK (107 aa)) form the AD domain.

It belongs to the LSM12 family. As to quaternary structure, forms a complex composed of at least MKT1, PBP1, XAC1 and LSM12. Forms a complex composed of at least MKT1L, PBP1, XAC1 and LSM12. Within the complex, interacts with PBP1; the interaction is direct.

Functionally, involved in post-transcriptional regulation of gene expression. The sequence is that of PBP1-interacting protein LSM12 from Trypanosoma brucei brucei (strain 927/4 GUTat10.1).